Here is a 208-residue protein sequence, read N- to C-terminus: Large ribosomal subunit protein uL4 (208 aa).

The interval 45–78 (RQGTAKSKERSEMSGSTRKLGRQKGSGGARRGDI) is disordered.

The protein belongs to the universal ribosomal protein uL4 family. Part of the 50S ribosomal subunit.

One of the primary rRNA binding proteins, this protein initially binds near the 5'-end of the 23S rRNA. It is important during the early stages of 50S assembly. It makes multiple contacts with different domains of the 23S rRNA in the assembled 50S subunit and ribosome. Its function is as follows. Forms part of the polypeptide exit tunnel. The chain is Large ribosomal subunit protein uL4 from Azobacteroides pseudotrichonymphae genomovar. CFP2.